The chain runs to 429 residues: Probable alcohol acetyltransferase orf1 (429 aa).

Belongs to the alcohol acetyltransferase FCK4 family.

It participates in secondary metabolite biosynthesis. In terms of biological role, probable alcohol acetyltransferase; part of the gene cluster that mediates the biosynthesis of the glycolipid biosurfactant ustilagic acid (UA). UA is a secreted cellobiose glycolipid that is toxic for many microorganisms and confers biocontrol activity to U.maydis. UA consists of 15,16-dihydroxypalmitic or 2,15,16-trihydroxypalmitic acid, which is O-glycosidically linked to cellobiose at its terminal hydroxyl group. In addition, the cellobiose moiety is acetylated and acylated with a short-chain hydroxy fatty acid. UA biosynthesis starts with omega-hydroxylation of palmitic acid catalyzed by the cytochrome P450 monooxygenase cyp1. Terminal hydroxylation of palmitic acid precedes subterminal hydroxylation catalyzed by the cytochrome P450 monooxygenase cyp2. Sequential glucosylation of the hydroxy fatty acid is probably catalyzed by the glycosyltransferase ugt1. The cellobiose lipid is further decorated by acetylation of the proximal glucose residue and by acylation with a short-chain beta-hydroxy fatty acid at the distal glucose residue. The acyltransferase uat1 may be a good candidate for catalyzing either acetylation or acylation of the cellobiose lipid. The fatty acid synthase fas2 may be involved in synthesis of the carbon backbone of the short-chain beta-hydroxy fatty acid esterified to the cellobiose disaccharide. The secreted UA consists of a mixture of both alpha-hydroxylated and non-hydroxylated glycolipids; therefore, alpha-hydroxylation of the long-chain fatty, catalyzed by the fatty acid hydroxylase ahd1, occurs late in UA biosynthesis and may be the last step before secretion. The sequence is that of Probable alcohol acetyltransferase orf1 from Mycosarcoma maydis (Corn smut fungus).